We begin with the raw amino-acid sequence, 351 residues long: Histidinol-phosphate aminotransferase (351 aa).

Lys209 carries the N6-(pyridoxal phosphate)lysine modification.

This sequence belongs to the class-II pyridoxal-phosphate-dependent aminotransferase family. Histidinol-phosphate aminotransferase subfamily. In terms of assembly, homodimer. The cofactor is pyridoxal 5'-phosphate.

The catalysed reaction is L-histidinol phosphate + 2-oxoglutarate = 3-(imidazol-4-yl)-2-oxopropyl phosphate + L-glutamate. Its pathway is amino-acid biosynthesis; L-histidine biosynthesis; L-histidine from 5-phospho-alpha-D-ribose 1-diphosphate: step 7/9. The chain is Histidinol-phosphate aminotransferase from Chromohalobacter salexigens (strain ATCC BAA-138 / DSM 3043 / CIP 106854 / NCIMB 13768 / 1H11).